Reading from the N-terminus, the 129-residue chain is MGKAKAERRLKDNEAQAVARTLRVSPQKLNLVAAAIRGKKVERALAELEFSRKRIAGAVKKTLESAIANAENNHDLDVDALVVAEAYVGKSIVMKRFHARGRGRASRIEKPFAHLTIVVREVQAAEEAA.

It belongs to the universal ribosomal protein uL22 family. In terms of assembly, part of the 50S ribosomal subunit.

Functionally, this protein binds specifically to 23S rRNA; its binding is stimulated by other ribosomal proteins, e.g. L4, L17, and L20. It is important during the early stages of 50S assembly. It makes multiple contacts with different domains of the 23S rRNA in the assembled 50S subunit and ribosome. In terms of biological role, the globular domain of the protein is located near the polypeptide exit tunnel on the outside of the subunit, while an extended beta-hairpin is found that lines the wall of the exit tunnel in the center of the 70S ribosome. The sequence is that of Large ribosomal subunit protein uL22 from Rhizobium etli (strain ATCC 51251 / DSM 11541 / JCM 21823 / NBRC 15573 / CFN 42).